The sequence spans 161 residues: MTGAVCPGSFDPVTLGHLDVFERAAAQFDEVIVAVLINPNKAGMFTVDERIEMIRESTADLPNLRVESGQGLLVDFVRERGLNAIVKGLRTGTDFEYELQMAQMNKHIAGVDTFFVATAPAYSFVSSSLAKEVATYGGDVSALLPASVHQRLLGKLRGQAQ.

Ser9 lines the substrate pocket. ATP-binding positions include 9-10 (SF) and His17. Substrate contacts are provided by Lys41, Leu73, and Lys87. ATP-binding positions include 88-90 (GLR), Glu98, and 122-128 (YSFVSSS).

It belongs to the bacterial CoaD family. As to quaternary structure, homohexamer. It depends on Mg(2+) as a cofactor.

Its subcellular location is the cytoplasm. It catalyses the reaction (R)-4'-phosphopantetheine + ATP + H(+) = 3'-dephospho-CoA + diphosphate. Its pathway is cofactor biosynthesis; coenzyme A biosynthesis; CoA from (R)-pantothenate: step 4/5. Functionally, reversibly transfers an adenylyl group from ATP to 4'-phosphopantetheine, yielding dephospho-CoA (dPCoA) and pyrophosphate. The polypeptide is Phosphopantetheine adenylyltransferase (Mycobacteroides abscessus (strain ATCC 19977 / DSM 44196 / CCUG 20993 / CIP 104536 / JCM 13569 / NCTC 13031 / TMC 1543 / L948) (Mycobacterium abscessus)).